The sequence spans 230 residues: Cytochrome c oxidase subunit 2 (230 aa).

Residues 1-14 (MAHPSQLGFQDAAS) are Mitochondrial intermembrane-facing. Residues 15-45 (PVMEELLHFHDHALMIVFLISTLVLYIIAAT) form a helical membrane-spanning segment. The Mitochondrial matrix portion of the chain corresponds to 46–59 (ASTKLTDKYILDSQ). A helical membrane pass occupies residues 60–87 (EIEVIWTIMPAVILILIALPSLRILYLM). Over 88–230 (DEINDPHLTV…NWSSLMLEDA (143 aa)) the chain is Mitochondrial intermembrane. Histidine 161, cysteine 196, glutamate 198, cysteine 200, histidine 204, and methionine 207 together coordinate Cu cation. Glutamate 198 contacts Mg(2+).

The protein belongs to the cytochrome c oxidase subunit 2 family. In terms of assembly, component of the cytochrome c oxidase (complex IV, CIV), a multisubunit enzyme composed of 14 subunits. The complex is composed of a catalytic core of 3 subunits MT-CO1, MT-CO2 and MT-CO3, encoded in the mitochondrial DNA, and 11 supernumerary subunits COX4I, COX5A, COX5B, COX6A, COX6B, COX6C, COX7A, COX7B, COX7C, COX8 and NDUFA4, which are encoded in the nuclear genome. The complex exists as a monomer or a dimer and forms supercomplexes (SCs) in the inner mitochondrial membrane with NADH-ubiquinone oxidoreductase (complex I, CI) and ubiquinol-cytochrome c oxidoreductase (cytochrome b-c1 complex, complex III, CIII), resulting in different assemblies (supercomplex SCI(1)III(2)IV(1) and megacomplex MCI(2)III(2)IV(2)). Found in a complex with TMEM177, COA6, COX18, COX20, SCO1 and SCO2. Interacts with TMEM177 in a COX20-dependent manner. Interacts with COX20. Interacts with COX16. The cofactor is Cu cation.

It localises to the mitochondrion inner membrane. It carries out the reaction 4 Fe(II)-[cytochrome c] + O2 + 8 H(+)(in) = 4 Fe(III)-[cytochrome c] + 2 H2O + 4 H(+)(out). Functionally, component of the cytochrome c oxidase, the last enzyme in the mitochondrial electron transport chain which drives oxidative phosphorylation. The respiratory chain contains 3 multisubunit complexes succinate dehydrogenase (complex II, CII), ubiquinol-cytochrome c oxidoreductase (cytochrome b-c1 complex, complex III, CIII) and cytochrome c oxidase (complex IV, CIV), that cooperate to transfer electrons derived from NADH and succinate to molecular oxygen, creating an electrochemical gradient over the inner membrane that drives transmembrane transport and the ATP synthase. Cytochrome c oxidase is the component of the respiratory chain that catalyzes the reduction of oxygen to water. Electrons originating from reduced cytochrome c in the intermembrane space (IMS) are transferred via the dinuclear copper A center (CU(A)) of subunit 2 and heme A of subunit 1 to the active site in subunit 1, a binuclear center (BNC) formed by heme A3 and copper B (CU(B)). The BNC reduces molecular oxygen to 2 water molecules using 4 electrons from cytochrome c in the IMS and 4 protons from the mitochondrial matrix. This chain is Cytochrome c oxidase subunit 2 (mt-co2), found in Tetraodon nigroviridis (Spotted green pufferfish).